A 250-amino-acid chain; its full sequence is Archaeal flagellar motor scaffold protein FlaX (250 aa).

Residues 1–9 (MAIQDLLQS) lie on the Extracellular side of the membrane. The helical transmembrane segment at 10–30 (SLFIILIGVGIPIAAFLEILF) threads the bilayer. Residues 31 to 250 (RVILPKTKRV…MILEGGGVNG (220 aa)) are Cytoplasmic-facing. A compositionally biased stretch (polar residues) spans 42–61 (TQQSPQNISQEQRFPTQQKP). The disordered stretch occupies residues 42 to 72 (TQQSPQNISQEQRFPTQQKPANDETSKYSSD). Residues 62-72 (ANDETSKYSSD) are compositionally biased toward basic and acidic residues.

In terms of assembly, the S.acidocaldarius archaellum assembly machinery and its filament consist of seven proteins (FlaB, FlaF, FlaG, FlaH, FlaI, FlaJ and FlaX). FlaX assembles into ring-shaped oligomers. Interacts directly with FlaH and the motor ATPase FlaI.

It is found in the archaeal flagellum. Its subcellular location is the cell membrane. Its activity is regulated as follows. The presence of the flagellar core components FlaH, FlaI and FlaJ seems to be crucial for the stability of FlaX. Functionally, component of the archaellum. FlaX, FlaH and FlaI form the core cytoplasmic motor complex of the crenarchaeal archaellum. FlaX forms a ring that may act as a membrane-bound cytoplasmic scaffold that guides the assembly of the archaellum motor complex. Is essential for archaellum assembly. This is Archaeal flagellar motor scaffold protein FlaX from Sulfolobus acidocaldarius (strain ATCC 33909 / DSM 639 / JCM 8929 / NBRC 15157 / NCIMB 11770).